The primary structure comprises 141 residues: Nucleoside diphosphate kinase (141 aa).

Residues lysine 11, phenylalanine 59, arginine 87, threonine 93, arginine 104, and asparagine 114 each contribute to the ATP site. The active-site Pros-phosphohistidine intermediate is histidine 117.

This sequence belongs to the NDK family. As to quaternary structure, homotetramer. Mg(2+) serves as cofactor.

The protein resides in the cytoplasm. The enzyme catalyses a 2'-deoxyribonucleoside 5'-diphosphate + ATP = a 2'-deoxyribonucleoside 5'-triphosphate + ADP. The catalysed reaction is a ribonucleoside 5'-diphosphate + ATP = a ribonucleoside 5'-triphosphate + ADP. Major role in the synthesis of nucleoside triphosphates other than ATP. The ATP gamma phosphate is transferred to the NDP beta phosphate via a ping-pong mechanism, using a phosphorylated active-site intermediate. The protein is Nucleoside diphosphate kinase of Pseudomonas entomophila (strain L48).